Here is a 531-residue protein sequence, read N- to C-terminus: Nuclear RNA export factor 3 (531 aa).

Disordered stretches follow at residues 33-59 (RSEPVNPGMHSSSHQQQDGDAAMHGAH) and 83-106 (QDQTHVNMEREQKPPERRMEGNMP). Residues 41 to 50 (MHSSSHQQQD) are compositionally biased toward polar residues. Over residues 83–102 (QDQTHVNMEREQKPPERRME) the composition is skewed to basic and acidic residues. The RRM domain maps to 113–192 (WFKITVPFGI…IFVNPAGIPH (80 aa)). Positions 344 to 494 (LVLQFLQQYY…LCIVNDKLFV (151 aa)) constitute an NTF2 domain.

It belongs to the NXF family. In terms of assembly, interacts with NXT1, NXT2, E1B-AP5 and CRM1 nuclear export factor. As to expression, expressed at high level in testis and at low level in a small number of tissues.

The protein resides in the nucleus. It localises to the cytoplasm. Its function is as follows. May function as a tissue-specific nuclear mRNA export factor. This chain is Nuclear RNA export factor 3 (NXF3), found in Homo sapiens (Human).